The following is a 230-amino-acid chain: Urease accessory protein UreF (230 aa).

This sequence belongs to the UreF family. As to quaternary structure, ureD, UreF and UreG form a complex that acts as a GTP-hydrolysis-dependent molecular chaperone, activating the urease apoprotein by helping to assemble the nickel containing metallocenter of UreC. The UreE protein probably delivers the nickel.

Its subcellular location is the cytoplasm. Required for maturation of urease via the functional incorporation of the urease nickel metallocenter. This is Urease accessory protein UreF from Allorhizobium ampelinum (strain ATCC BAA-846 / DSM 112012 / S4) (Agrobacterium vitis (strain S4)).